Consider the following 352-residue polypeptide: Elongation factor Tu, mitochondrial (352 aa).

Residues 45 to 241 enclose the tr-type G domain; that stretch reads RPHVNVGTIG…AIDTHIPLPH (197 aa). A G1 region spans residues 54-61; the sequence is GHVDHGKT. D57, G59, K60, T61, and T62 together coordinate GTP. T61 is a binding site for Mg(2+). A G2 region spans residues 95-99; the sequence is GITIN. The interval 116–119 is G3; the sequence is DCPG. 5 residues coordinate GTP: N171, D174, S209, A210, and L211. The interval 171-174 is G4; that stretch reads NKAD. Residues 209-211 form a G5 region; it reads SAL.

The protein localises to the mitochondrion. The enzyme catalyses GTP + H2O = GDP + phosphate + H(+). Its function is as follows. GTP hydrolase that promotes the GTP-dependent binding of aminoacyl-tRNA to the A-site of ribosomes during protein biosynthesis. This chain is Elongation factor Tu, mitochondrial, found in Gallus gallus (Chicken).